The sequence spans 360 residues: Mannonate dehydratase (360 aa).

This sequence belongs to the mannonate dehydratase family. Fe(2+) serves as cofactor. It depends on Mn(2+) as a cofactor.

The catalysed reaction is D-mannonate = 2-dehydro-3-deoxy-D-gluconate + H2O. It functions in the pathway carbohydrate metabolism; pentose and glucuronate interconversion. In terms of biological role, catalyzes the dehydration of D-mannonate. In Thermotoga sp. (strain RQ2), this protein is Mannonate dehydratase.